A 2269-amino-acid polypeptide reads, in one-letter code: Anaphase-promoting complex subunit 1 (2269 aa).

5 disordered regions span residues proline 305–asparagine 334, serine 379–serine 433, asparagine 609–leucine 644, lysine 804–asparagine 845, and serine 1136–serine 1197. Composition is skewed to low complexity over residues serine 306–asparagine 334, serine 379–glutamine 430, asparagine 609–asparagine 638, asparagine 809–asparagine 845, and serine 1136–asparagine 1159. The segment covering glycine 1160–asparagine 1177 has biased composition (polar residues). 2 PC repeats span residues alanine 1440–aspartate 1472 and threonine 1483–glutamate 1520. A disordered region spans residues serine 1535–lysine 1586. Residues serine 1540–serine 1559 are compositionally biased toward low complexity. Residues asparagine 1560 to asparagine 1570 are compositionally biased toward gly residues. Residues asparagine 1571–serine 1583 are compositionally biased toward low complexity. PC repeat units follow at residues glycine 1605–tyrosine 1637, glycine 1722–tyrosine 1756, and leucine 1792–arginine 1807. Positions asparagine 1960–asparagine 1993 are enriched in low complexity. A disordered region spans residues asparagine 1960–leucine 1997.

The protein belongs to the APC1 family. The APC/C is composed of at least 13 subunits that stay tightly associated throughout the cell cycle: anapc1, anapc2, anapc3, anapc4, anapc5, anapc6, anapc7, anapc8, anapc10, anapc11, cdc20, cdc26 and cdh1.

The protein resides in the nucleus. It participates in protein modification; protein ubiquitination. Component of the anaphase promoting complex/cyclosome (APC/C), a cell cycle-regulated E3 ubiquitin-protein ligase complex that controls progression through mitosis and the G1 phase of the cell cycle. The protein is Anaphase-promoting complex subunit 1 (anapc1) of Dictyostelium discoideum (Social amoeba).